The sequence spans 108 residues: Probable endonuclease 4 (108 aa).

Residues His2, His36, Asp49, His51, and Glu81 each contribute to the Zn(2+) site.

This sequence belongs to the AP endonuclease 2 family. The cofactor is Zn(2+).

The enzyme catalyses Endonucleolytic cleavage to 5'-phosphooligonucleotide end-products.. Functionally, endonuclease IV plays a role in DNA repair. It cleaves phosphodiester bonds at apurinic or apyrimidinic (AP) sites, generating a 3'-hydroxyl group and a 5'-terminal sugar phosphate. This Thermotoga neapolitana protein is Probable endonuclease 4 (nfo).